The sequence spans 414 residues: DNA polymerase processivity factor (414 aa).

Residues 327-414 form a disordered region; it reads SESCSLDPPR…SLKLTFNPLI (88 aa). The span at 389–405 shows a compositional bias: basic residues; that stretch reads SEKRKREGGKKGPKAKS.

The protein belongs to the herpesviridae DNA polymerase accessory subunit family.

Its function is as follows. Increases the processivity of the viral polymerase, probably by acting as a sliding clamp that prevents dissociation of the polymerase from the active template. This Equine herpesvirus 2 (strain 86/87) (EHV-2) protein is DNA polymerase processivity factor (59).